Reading from the N-terminus, the 418-residue chain is Replication factor C large subunit (418 aa).

47–54 (GSQGTGKT) provides a ligand contact to ATP.

It belongs to the activator 1 small subunits family. RfcL subfamily. In terms of assembly, heteromultimer composed of small subunits (RfcS) and large subunits (RfcL).

In terms of biological role, part of the RFC clamp loader complex which loads the PCNA sliding clamp onto DNA. The sequence is that of Replication factor C large subunit from Thermoplasma acidophilum (strain ATCC 25905 / DSM 1728 / JCM 9062 / NBRC 15155 / AMRC-C165).